Consider the following 562-residue polypeptide: Flagella accessory protein J (562 aa).

9 consecutive transmembrane segments (helical) span residues 32 to 52, 53 to 73, 199 to 219, 225 to 245, 273 to 293, 302 to 322, 446 to 466, 498 to 518, and 527 to 547; these read IVLI…IYLL, LPII…DSQK, VSAM…PFLL, FMAT…VVVI, IISV…KYIV, PYMI…FVAL, FVGV…ASLG, VVEY…AILI, and FVSL…AYIT.

To M.voltae FlaJ. This sequence to M.jannaschii MJ1286.

Its subcellular location is the cell membrane. It localises to the archaeal flagellum. This is Flagella accessory protein J (flaJ) from Methanocaldococcus jannaschii (strain ATCC 43067 / DSM 2661 / JAL-1 / JCM 10045 / NBRC 100440) (Methanococcus jannaschii).